The chain runs to 1461 residues: Calmodulin-regulated spectrin-associated protein 2 (1461 aa).

A Calponin-homology (CH) domain is found at 211-324 (PGGQKARYRK…FMAELFWWFE (114 aa)). The disordered stretch occupies residues 361-389 (RDSSSSSDFSSRYTRPQTHSSASGGIRRS). Composition is skewed to low complexity over residues 362–371 (DSSSSSDFSS) and 380–389 (SSASGGIRRS). Residues Ser-391 and Ser-393 each carry the phosphoserine modification. Position 401 is a phosphothreonine (Thr-401). 5 positions are modified to phosphoserine: Ser-439, Ser-572, Ser-573, Ser-585, and Ser-647. Disordered stretches follow at residues 573 to 613 (SPDN…EDSS) and 639 to 704 (ASNP…GSEL). Position 652 is a phosphothreonine (Thr-652). Residue Ser-654 is modified to Phosphoserine. Residues 654 to 673 (STKSQPGSSASSSSGVKMTS) show a composition bias toward low complexity. Over residues 677–687 (QKFRKLNHTDG) the composition is skewed to basic and acidic residues. Residues 730 to 767 (LLASEMVHLRMRLEEKRRAIEAQKKKMEAAFTKQRQKM) are a coiled coil. Basic and acidic residues predominate over residues 787–826 (REEAAGAEDEKVYTDRAKERESQKMDGQRSKSLADIKESM). Residues 787 to 855 (REEAAGAEDE…QWNLTSPSEE (69 aa)) form a disordered region. Residue Ser-836 is modified to Phosphoserine. Residues 861 to 900 (EILEYTKSIEKLNSSLHFLQQEMQRLSLQQEMLMQMREQQ) adopt a coiled-coil conformation. Positions 896 to 1007 (MREQQAWVIS…IQTRSFVCFG (112 aa)) are MBD region. Ser-905 and Ser-910 each carry phosphoserine. 5 disordered regions span residues 921-992 (RQAG…RRFS), 1004-1044 (VCFG…GEKE), 1069-1090 (NEDQLSQPTEPPPKPVFPPTAP), 1102-1124 (DLKPPEKADVSVEKLDGESDKEQ), and 1163-1321 (KETQ…EYTG). The segment covering 926–937 (SSAAAPFSSDSP) has biased composition (low complexity). Residues 943 to 962 (SPQSSTRKSASFSVKNQRTP) show a composition bias toward polar residues. 3 positions are modified to phosphothreonine: Thr-970, Thr-975, and Thr-977. 2 positions are modified to phosphoserine: Ser-981 and Ser-992. Positions 1011 to 1028 (EPQKEPKQKEEIKKEPSE) are enriched in basic and acidic residues. Over residues 1077-1089 (TEPPPKPVFPPTA) the composition is skewed to pro residues. 2 stretches are compositionally biased toward basic and acidic residues: residues 1104-1124 (KPPEKADVSVEKLDGESDKEQ) and 1163-1224 (KETQ…DTVI). Ser-1120 carries the post-translational modification Phosphoserine. Residues 1138–1210 (KDDQKAENDM…REFIRQEYMR (73 aa)) are a coiled coil. A compositionally biased stretch (polar residues) spans 1259–1271 (SSLSLASLNTGDS). 3 positions are modified to phosphoserine: Ser-1285, Ser-1291, and Ser-1293. Residues 1306 to 1318 (NASTTSSVASGTE) show a composition bias toward polar residues. Positions 1321–1455 (GPKLYKEPSA…QTKRPVTPKK (135 aa)) constitute a CKK domain.

It belongs to the CAMSAP1 family. As to quaternary structure, interacts with CAMSAP3. Interacts with KATNA1 and KATNB1; leading to regulate the length of CAMSAP2-decorated microtubule stretches. Interacts with a complex formed by AKAP9 and PDE4DIP isoform 2/MMG8/SMYLE, which recruits CAMSAP2 to the Golgi. Interacts with MAPRE1/EB1.

It is found in the cytoplasm. The protein localises to the cytoskeleton. It localises to the golgi apparatus. Its subcellular location is the cilium basal body. Its function is as follows. Key microtubule-organizing protein that specifically binds the minus-end of non-centrosomal microtubules and regulates their dynamics and organization. Specifically recognizes growing microtubule minus-ends and autonomously decorates and stabilizes microtubule lattice formed by microtubule minus-end polymerization. Acts on free microtubule minus-ends that are not capped by microtubule-nucleating proteins or other factors and protects microtubule minus-ends from depolymerization. In addition, it also reduces the velocity of microtubule polymerization. Through the microtubule cytoskeleton, also regulates the organization of cellular organelles including the Golgi and the early endosomes. Essential for the tethering, but not for nucleation of non-centrosomal microtubules at the Golgi: together with Golgi-associated proteins AKAP9 and PDE4DIP, required to tether non-centrosomal minus-end microtubules to the Golgi, an important step for polarized cell movement. Also acts as a regulator of neuronal polarity and development: localizes to non-centrosomal microtubule minus-ends in neurons and stabilizes non-centrosomal microtubules, which is required for neuronal polarity, axon specification and dendritic branch formation. Through the microtubule cytoskeleton, regulates the autophagosome transport. This Mus musculus (Mouse) protein is Calmodulin-regulated spectrin-associated protein 2.